We begin with the raw amino-acid sequence, 162 residues long: RxLR effector protein PITG_06094 (162 aa).

Positions 1–20 (MRLSFILAATLTGLLACATA) are cleaved as a signal peptide. Positions 51–91 (RFLRAYNDAEDDSEDPKNVKNTVDAKPADESEDSELSEEER) match the RxLR-dEER motif. The disordered stretch occupies residues 56-88 (YNDAEDDSEDPKNVKNTVDAKPADESEDSELSE).

It belongs to the RxLR effector family.

The protein localises to the secreted. It is found in the host cytoplasm. The protein resides in the host nucleus. Its subcellular location is the host nucleolus. Effector that enhances P.infestans colonization of Nicotiana benthamiana leaves. The chain is RxLR effector protein PITG_06094 from Phytophthora infestans (strain T30-4) (Potato late blight agent).